A 277-amino-acid polypeptide reads, in one-letter code: NH(3)-dependent NAD(+) synthetase (277 aa).

Position 46-53 (46-53 (GISGGQDS)) interacts with ATP. D52 contacts Mg(2+). A deamido-NAD(+)-binding site is contributed by R142. T162 contacts ATP. Mg(2+) is bound at residue E167. Deamido-NAD(+) is bound by residues K175 and D182. ATP-binding residues include K191 and T213. 263–264 (HK) contacts deamido-NAD(+).

Belongs to the NAD synthetase family. As to quaternary structure, homodimer.

The enzyme catalyses deamido-NAD(+) + NH4(+) + ATP = AMP + diphosphate + NAD(+) + H(+). It participates in cofactor biosynthesis; NAD(+) biosynthesis; NAD(+) from deamido-NAD(+) (ammonia route): step 1/1. Its function is as follows. Catalyzes the ATP-dependent amidation of deamido-NAD to form NAD. Uses ammonia as a nitrogen source. This chain is NH(3)-dependent NAD(+) synthetase, found in Corynebacterium glutamicum (strain ATCC 13032 / DSM 20300 / JCM 1318 / BCRC 11384 / CCUG 27702 / LMG 3730 / NBRC 12168 / NCIMB 10025 / NRRL B-2784 / 534).